The sequence spans 162 residues: Zinc finger protein ZAT12 (162 aa).

2 consecutive C2H2-type zinc fingers follow at residues 39–61 (FTCK…RASH) and 82–104 (HPCP…MRRH).

Expressed in roots, stems and flowers.

It is found in the nucleus. Its function is as follows. Transcriptional repressor involved in light acclimation, cold and oxidative stress responses. May regulate a collection of transcripts involved in response to high-light, cold and oxidative stress. In Arabidopsis thaliana (Mouse-ear cress), this protein is Zinc finger protein ZAT12 (ZAT12).